A 77-amino-acid polypeptide reads, in one-letter code: UPF0349 protein lwe2340 (77 aa).

This sequence belongs to the UPF0349 family.

The chain is UPF0349 protein lwe2340 from Listeria welshimeri serovar 6b (strain ATCC 35897 / DSM 20650 / CCUG 15529 / CIP 8149 / NCTC 11857 / SLCC 5334 / V8).